Here is a 178-residue protein sequence, read N- to C-terminus: MNKMDRQRIETVGKLGSTYGIRGWLRIYSSTENAESIFDYQPWFLKIKDQWQAIELETWKHHNHELIVKLKNINDRETAQTLANVEIGVDLSVFPALEEGDFYWHDLIGCQVVNLQGYAMGTVSEMMETGSNDVLVVRANAKDAFGKQERLIPFLYEQVVKRVDLTTKTIEVDWDAGF.

Positions 99 to 178 (EGDFYWHDLI…TIEVDWDAGF (80 aa)) constitute a PRC barrel domain.

Belongs to the RimM family. As to quaternary structure, binds ribosomal protein uS19.

Its subcellular location is the cytoplasm. Its function is as follows. An accessory protein needed during the final step in the assembly of 30S ribosomal subunit, possibly for assembly of the head region. Essential for efficient processing of 16S rRNA. May be needed both before and after RbfA during the maturation of 16S rRNA. It has affinity for free ribosomal 30S subunits but not for 70S ribosomes. This chain is Ribosome maturation factor RimM, found in Mannheimia succiniciproducens (strain KCTC 0769BP / MBEL55E).